The sequence spans 21 residues: MNRISTTTITTITITTGNGAG.

This sequence belongs to the thr operon leader peptide family.

Its function is as follows. This protein is involved in control of the biosynthesis of threonine. The sequence is that of thr operon leader peptide from Salmonella choleraesuis (strain SC-B67).